We begin with the raw amino-acid sequence, 254 residues long: tRNA (guanine-N(1)-)-methyltransferase (254 aa).

Residues glycine 114 and 134–139 (IGDYVL) each bind S-adenosyl-L-methionine.

This sequence belongs to the RNA methyltransferase TrmD family. In terms of assembly, homodimer.

It is found in the cytoplasm. The enzyme catalyses guanosine(37) in tRNA + S-adenosyl-L-methionine = N(1)-methylguanosine(37) in tRNA + S-adenosyl-L-homocysteine + H(+). In terms of biological role, specifically methylates guanosine-37 in various tRNAs. This chain is tRNA (guanine-N(1)-)-methyltransferase, found in Desulforamulus reducens (strain ATCC BAA-1160 / DSM 100696 / MI-1) (Desulfotomaculum reducens).